Consider the following 329-residue polypeptide: Peroxidase 58 (329 aa).

Residues 1 to 23 (MGLSKTIPLVLLPILMFGVLSNA) form the signal peptide. Cystine bridges form between C34-C116, C67-C72, C122-C325, and C201-C234. N-linked (GlcNAc...) asparagine glycosylation occurs at N36. The active-site Proton acceptor is the H65. 5 residues coordinate Ca(2+): D66, V69, G71, D73, and S75. P164 is a substrate binding site. H194 contributes to the heme b binding site. T195 serves as a coordination point for Ca(2+). An N-linked (GlcNAc...) asparagine glycan is attached at N210. Ca(2+) contacts are provided by D247, S250, and D255.

The protein belongs to the peroxidase family. Classical plant (class III) peroxidase subfamily. It depends on heme b as a cofactor. Ca(2+) serves as cofactor.

Its subcellular location is the secreted. The catalysed reaction is 2 a phenolic donor + H2O2 = 2 a phenolic radical donor + 2 H2O. Removal of H(2)O(2), oxidation of toxic reductants, biosynthesis and degradation of lignin, suberization, auxin catabolism, response to environmental stresses such as wounding, pathogen attack and oxidative stress. These functions might be dependent on each isozyme/isoform in each plant tissue. The chain is Peroxidase 58 (PER58) from Arabidopsis thaliana (Mouse-ear cress).